The primary structure comprises 1056 residues: ISWI chromatin-remodeling complex ATPase CHR11 (1056 aa).

Residues 1–10 (MARNSNSDEA) are compositionally biased toward low complexity. Disordered stretches follow at residues 1 to 80 (MARN…SKRE) and 133 to 175 (KSDG…GSGN). 2 stretches are compositionally biased toward acidic residues: residues 11–32 (FSSE…EELE) and 60–73 (PVED…DEEK). Residues 12-105 (SSEEEEERVK…QEMLESQNAS (94 aa)) adopt a coiled-coil conformation. The segment covering 141-151 (KKAKGRGRHAS) has biased composition (basic residues). Acidic residues predominate over residues 155 to 169 (EEEEDEEYLKEEEDG). Residues 201–366 (IRLYENGING…WALLNFLLPE (166 aa)) form the Helicase ATP-binding domain. 214 to 221 (DEMGLGKT) serves as a coordination point for ATP. Residues 317–320 (DEAH) carry the DEAH box motif. In terms of domain architecture, Helicase C-terminal spans 494-645 (LLDKLLPKLK…ALVIQQGRLA (152 aa)). Disordered stretches follow at residues 738–774 (WNDP…PRIP) and 814–833 (IDVE…EVEE). The segment covering 815–833 (DVEEPEEGGDPLTTEEVEE) has biased composition (acidic residues). SANT domains lie at 840–892 (EGFS…ERYK) and 941–1002 (QNKG…DTLI). The interval 1011-1056 (EFDERERQARKEKKLAKSATPSKRPLGRQASESPSSTKKRKHLSMR) is disordered. The span at 1047 to 1056 (TKKRKHLSMR) shows a compositional bias: basic residues.

This sequence belongs to the SNF2/RAD54 helicase family. ISWI subfamily. Interacts with RLT1 and RLT2. Interacts (via C-terminus) with RLT1 (via the DDT domain), RLT2 (via the DDT domain), PTM (via the DDT domain) and DDR4 (via the DDT domain). Binds to FGT1. Highly expressed in growing tissues such as inflorescence and flower meristems, young leaves and floral organs. Expressed in roots, rosette and cauline leaves, stems, flowers, inflorescences and siliques.

Its subcellular location is the nucleus. Functionally, possesses intrinsic ATP-dependent nucleosome-remodeling activity. Constitutes the catalytic subunit of several complexes capable of forming ordered nucleosome arrays on chromatin. Involved in the formation of nucleosome distribution patterns. Involved in nuclear proliferation during megagametogenesis and cell expansion in the sporophyte. Required for the maintenance of the plant vegetative phase. In association with RLT1 or RLT2 may prevent the early activation of the vegetative-to-reproductive transition by regulating key genes that contribute to flower timing, such as FT, SEP1, SEP3, AGL8/FUL, SOC1 and FLC. Necessary to acquire heat stress (HS) memory. This is ISWI chromatin-remodeling complex ATPase CHR11 from Arabidopsis thaliana (Mouse-ear cress).